The chain runs to 298 residues: Spermidine synthase (298 aa).

The PABS domain maps to 13-248 (DGWFREINNM…GSIGFVVASK (236 aa)). Residue Gln-44 participates in S-adenosyl 3-(methylsulfanyl)propylamine binding. Residue Tyr-74 coordinates putrescine. S-adenosyl 3-(methylsulfanyl)propylamine-binding positions include Gln-75, Asp-99, Asp-119, 150-151 (DG), and Asp-168. The active-site Proton acceptor is the Asp-168. Putrescine-binding positions include 168-171 (DSSD) and Tyr-236.

The protein belongs to the spermidine/spermine synthase family.

It carries out the reaction S-adenosyl 3-(methylsulfanyl)propylamine + putrescine = S-methyl-5'-thioadenosine + spermidine + H(+). It functions in the pathway amine and polyamine biosynthesis; spermidine biosynthesis; spermidine from putrescine: step 1/1. The protein is Spermidine synthase of Schizosaccharomyces pombe (strain 972 / ATCC 24843) (Fission yeast).